The primary structure comprises 455 residues: SUN domain-containing protein 2 (455 aa).

Positions 1–12 are enriched in polar residues; it reads MSASTVSITASP. A disordered region spans residues 1 to 99; it reads MSASTVSITA…RTRKSQGNKI (99 aa). N-acetylserine is present on Ser-2. Residues 2–105 are Nuclear-facing; that stretch reads SASTVSITAS…GNKIDRGKWK (104 aa). Ser-63 carries the phosphoserine modification. Residues 74-88 are compositionally biased toward low complexity; the sequence is KSGSTATGTNTTTTQ. The short motif at 88–95 is the Nuclear localization signal element; that stretch reads QRRTRKSQ. A helical membrane pass occupies residues 106–128; that stretch reads TVVRVFAKQFGALLLLVGLIQLI. The Perinuclear space portion of the chain corresponds to 129–455; that stretch reads RKLTLKDSSL…ELDSVSVAHA (327 aa). Residues 201–225 adopt a coiled-coil conformation; it reads LHSELKKVESKTERLQVSVDELNAK. The SUN domain occupies 285–447; it reads GGAFVMGHSD…YRFRVHGREL (163 aa).

As to quaternary structure, forms homomers (e.g. dimers, trimers and tetramers) and heteromers with SUN1. Interacts with SUN3, SUN4 and TIK. Core component of the LINC complex which is composed of inner nuclear membrane SUN domain-containing proteins coupled to outer nuclear membrane WIP and WIT proteins. The LINC complex also involves nucleoskeletal proteins CRWN/LINC and possibly KAKU4 and the cytoskeletal myosin KAKU1. Interacts with LINC1, WIP1, WIP2 and WIP3 at the nuclear envelope (NE). Interacts with SINE1, SINE2, SINE3 and SINE4. Interacts with NEAP1, NEA2 and NEAP3. In terms of tissue distribution, expressed in roots, hypocotyls, cotyledons and leaves and inflorescences.

Its subcellular location is the nucleus inner membrane. The protein resides in the cytoplasm. The protein localises to the cytoskeleton. It localises to the phragmoplast. It is found in the endoplasmic reticulum membrane. Its subcellular location is the nucleus envelope. Functionally, component of SUN-protein-containing multivariate complexes also called LINC complexes which link the nucleoskeleton and cytoskeleton by providing versatile outer nuclear membrane attachment sites for cytoskeletal filaments. Required for the maintenance and/or formation of polarized nuclear shape in root hairs. Modulates the anchoring and mobility of WIP proteins in the nuclear envelope (NE). In association with SUN1, may be involved in telomere attachment to nuclear envelope in the prophase of meiosis. As component of the SUN-WIP-WIT2-KAKU1 complex, mediates the transfer of cytoplasmic forces to the nuclear envelope (NE), leading to nuclear shape changes. In Arabidopsis thaliana (Mouse-ear cress), this protein is SUN domain-containing protein 2.